The sequence spans 695 residues: ATP-dependent zinc metalloprotease FtsH (695 aa).

Residues 1-15 (MNNNKQPKQGNFVKN) lie on the Cytoplasmic side of the membrane. The chain crosses the membrane as a helical span at residues 16-36 (ILMWVILAIVVVVGFNFFFSS). The Extracellular segment spans residues 37–139 (NQSSVDKISY…QASSSGMWVQ (103 aa)). The chain crosses the membrane as a helical span at residues 140-160 (ILSYIIPMLLFVGIFWLMMGG). At 161–695 (MGARGGGGGG…KEKSEDETAE (535 aa)) the chain is on the cytoplasmic side. 233 to 240 (GPPGTGKT) contacts ATP. His456 contributes to the Zn(2+) binding site. Residue Glu457 is part of the active site. Residues His460 and Asp532 each contribute to the Zn(2+) site. Residues 657–695 (KDANANVDDFSNINIYNGDEKTDSKPEENKEKSEDETAE) form a disordered region. Over residues 674–695 (GDEKTDSKPEENKEKSEDETAE) the composition is skewed to basic and acidic residues.

In the central section; belongs to the AAA ATPase family. The protein in the C-terminal section; belongs to the peptidase M41 family. In terms of assembly, homohexamer. The cofactor is Zn(2+).

Its subcellular location is the cell membrane. Acts as a processive, ATP-dependent zinc metallopeptidase for both cytoplasmic and membrane proteins. Plays a role in the quality control of integral membrane proteins. The sequence is that of ATP-dependent zinc metalloprotease FtsH from Lactococcus lactis subsp. lactis (strain IL1403) (Streptococcus lactis).